Consider the following 174-residue polypeptide: RNA pyrophosphohydrolase (174 aa).

One can recognise a Nudix hydrolase domain in the interval 6–149; that stretch reads GFRANVGIII…KRDVYRKVMK (144 aa). The Nudix box motif lies at 38-59; it reads GGVDDGESAEEAMYRELYEEVG.

This sequence belongs to the Nudix hydrolase family. RppH subfamily. Requires a divalent metal cation as cofactor.

Accelerates the degradation of transcripts by removing pyrophosphate from the 5'-end of triphosphorylated RNA, leading to a more labile monophosphorylated state that can stimulate subsequent ribonuclease cleavage. The sequence is that of RNA pyrophosphohydrolase from Shewanella sp. (strain W3-18-1).